We begin with the raw amino-acid sequence, 256 residues long: MNNIWWQTKGQGNVHLVLLHGWGLNAEVWRCIDEELSSHFTLHLVDLPGFGRSRGFGALSLADMAEAVLQQAPDKAIWLGWSLGGLVASQIVLTHPERVQALVTVASSPCFSARDEWPGIKPDVLAGFQQQLSDDFQRTVERFLALQTMGTETARQDARALKKTVLALPMPEVDVLNGGLEILKTVDLRQPLQNVSMPFLRLYGYLDGLVPRKVVPMLDKLWPHSESYIFAKAAHAPFISHPVEFCHLLVALKQRV.

The AB hydrolase-1 domain maps to 15-242 (HLVLLHGWGL…AAHAPFISHP (228 aa)). Residues tryptophan 22, 82–83 (SL), and 143–147 (FLALQ) each bind substrate. The Nucleophile role is filled by serine 82. Catalysis depends on residues aspartate 207 and histidine 235. Histidine 235 provides a ligand contact to substrate.

This sequence belongs to the AB hydrolase superfamily. Carboxylesterase BioH family. Monomer.

Its subcellular location is the cytoplasm. It carries out the reaction 6-carboxyhexanoyl-[ACP] methyl ester + H2O = 6-carboxyhexanoyl-[ACP] + methanol + H(+). It participates in cofactor biosynthesis; biotin biosynthesis. In terms of biological role, the physiological role of BioH is to remove the methyl group introduced by BioC when the pimeloyl moiety is complete. It allows to synthesize pimeloyl-ACP via the fatty acid synthetic pathway through the hydrolysis of the ester bonds of pimeloyl-ACP esters. This chain is Pimeloyl-[acyl-carrier protein] methyl ester esterase, found in Escherichia coli (strain 55989 / EAEC).